Consider the following 615-residue polypeptide: Sodium-dependent neutral amino acid transporter B(0)AT3 (615 aa).

At 1 to 26 the chain is on the cytoplasmic side; sequence MAQASGMDPLVDIEDERPKWDNKLQY. The helical transmembrane segment at 27 to 47 threads the bilayer; the sequence is LLSCIGFAVGLGNIWRFPYLC. The Extracellular portion of the chain corresponds to 48 to 52; it reads QTHGG. The chain crosses the membrane as a helical span at residues 53-73; sequence GAFLIPYFIALVFEGIPLFYI. The Cytoplasmic segment spans residues 74-105; the sequence is ELAIGQRLRRGSIGVWKTISPYLGGVGLGCFS. The chain crosses the membrane as a helical span at residues 106–126; it reads VSFLVSLYYNTVLLWVLWFFL. Residues 127–177 lie on the Extracellular side of the membrane; that stretch reads NSFQHPLPWSTCPLDLNRTGFVQECQSSGTVSYFWYRQTLNITSDISNTGT. 2 N-linked (GlcNAc...) asparagine glycosylation sites follow: N143 and N167. The chain crosses the membrane as a helical span at residues 178–198; that stretch reads IQWKLFLCLVACWSTVYLCVI. Residues 199-206 are Cytoplasmic-facing; that stretch reads RGIESTGK. Residues 207–227 form a helical membrane-spanning segment; it reads VIYFTALFPYLVLTIFLIRGL. Residues 228–255 are Extracellular-facing; the sequence is TLPGATEGLIYLFTPNMKTLQNPRVWLD. The chain crosses the membrane as a helical span at residues 256–276; that stretch reads AATQIFFSLSLAFGGHIAFAS. At 277-288 the chain is on the cytoplasmic side; sequence YNPPRNNCEKDA. Residues 289-309 form a helical membrane-spanning segment; that stretch reads VIIALVNSMTSLYASIAIFSV. Topologically, residues 310–397 are extracellular; the sequence is MGFKASNDYG…FTEAVLHMPG (88 aa). N353 is a glycosylation site (N-linked (GlcNAc...) asparagine). The chain crosses the membrane as a helical span at residues 398 to 418; it reads ASVWSVLFFGMLFTLGLSSMF. Residues 419-441 are Cytoplasmic-facing; the sequence is GNMEGVITPLLDMGILPKGIPKE. Residues 442–462 traverse the membrane as a helical segment; the sequence is VMTGVICFACFLSAICFTLQS. At 463–472 the chain is on the extracellular side; that stretch reads GGYWLEIFDS. Residues 473-493 traverse the membrane as a helical segment; that stretch reads FAASLNLIIFAFMEVVGVIHI. The Cytoplasmic portion of the chain corresponds to 494–520; that stretch reads YGMKRFCDDIEWMTGRRPGLYWQVTWR. The helical transmembrane segment at 521–541 threads the bilayer; sequence VVSPMLLFGIFLSYIVLLIQT. Residues 542 to 570 are Extracellular-facing; sequence PPSYKAWNPQYEHFPSREEKFYPGWVQVT. Residues 571-591 form a helical membrane-spanning segment; that stretch reads CVLLSFLPSLWVPGVALAQLL. At 592-615 the chain is on the cytoplasmic side; the sequence is SQYKQRWKATHLESGLKLQESRGC.

This sequence belongs to the sodium:neurotransmitter symporter (SNF) (TC 2.A.22) family. SLC6A18 subfamily. In terms of assembly, interacts with CLTRN; this interaction regulates the trafficking of SLC6A18 to the cell membrane and its activity. In terms of tissue distribution, expressed predominantly in kidney.

The protein localises to the apical cell membrane. Its subcellular location is the cell membrane. It carries out the reaction L-alanine(out) + chloride(out) + 2 Na(+)(out) = L-alanine(in) + chloride(in) + 2 Na(+)(in). The catalysed reaction is glycine(out) + chloride(out) + 2 Na(+)(out) = glycine(in) + chloride(in) + 2 Na(+)(in). It catalyses the reaction L-methionine(out) + chloride(out) + 2 Na(+)(out) = L-methionine(in) + chloride(in) + 2 Na(+)(in). The enzyme catalyses L-valine(out) + chloride(out) + 2 Na(+)(out) = L-valine(in) + chloride(in) + 2 Na(+)(in). It carries out the reaction L-isoleucine(out) + chloride(out) + 2 Na(+)(out) = L-isoleucine(in) + chloride(in) + 2 Na(+)(in). The catalysed reaction is L-serine(out) + chloride(out) + 2 Na(+)(out) = L-serine(in) + chloride(in) + 2 Na(+)(in). It catalyses the reaction L-leucine(out) + chloride(out) + 2 Na(+)(out) = L-leucine(in) + chloride(in) + 2 Na(+)(in). Its function is as follows. Symporter that transports one amino acid molecule together with two sodium and one chloride ions in kidneys and plays a role in the neutral amino acids reabsorption. Preferentially transports neutral amino acids such as L-glycine and L-alanine but also other neutral amino acids. Required CLTRN for cell surface expression and for its amino acid transporter activity. The transport mechanism is pH-independent. In Mus musculus (Mouse), this protein is Sodium-dependent neutral amino acid transporter B(0)AT3.